The sequence spans 404 residues: uncharacterized protein (404 aa).

2 disordered regions span residues 261–307 (VSTG…SPSL) and 320–340 (KKSH…GGAD). Phosphoserine is present on residues Ser-267, Ser-276, and Ser-279. 2 positions are modified to phosphothreonine: Thr-290 and Thr-293. Phosphoserine is present on residues Ser-304, Ser-306, Ser-324, Ser-358, and Ser-362. Residues 320 to 336 (KKSHSANDSEEFFREDD) show a composition bias toward basic and acidic residues.

This is an uncharacterized protein from Homo sapiens (Human).